Here is a 98-residue protein sequence, read N- to C-terminus: Ferredoxin-like protein (98 aa).

The protein to ferredoxins from P.putida and C.tartarivorum, ferredoxin I from A.vinelandii, ferredoxin II from D.desulfuricans.

In terms of biological role, could be a 3Fe-4S cluster-containing protein. The sequence is that of Ferredoxin-like protein (fixX) from Rhizobium leguminosarum bv. trifolii.